Reading from the N-terminus, the 410-residue chain is DNA primase small subunit (410 aa).

Catalysis depends on residues E43, D106, and D108. The Zinc knuckle motif signature appears at 118-129 (CCKDATVCPKCW).

Belongs to the eukaryotic-type primase small subunit family. Heterodimer of a small subunit and a large subunit.

In terms of biological role, DNA primase is the polymerase that synthesizes small RNA primers for the Okazaki fragments made during discontinuous DNA replication. The chain is DNA primase small subunit (pri-1) from Caenorhabditis elegans.